The chain runs to 123 residues: MASHVECRPLGVFECELCTLTAPYSYVGQKPPNTQSMVLLEESYVMKDPFTSDKDRFLVLGSCCSLCSRLVCVGPECSLFYSKRFCLPCVRENINAFPQEIRQDLEKRKAPSKRTPSQPGSRT.

Positions Arg102–Thr123 are disordered. Residues Arg114–Thr123 are compositionally biased toward polar residues.

Belongs to the CDPF1 family.

The polypeptide is Cysteine-rich DPF motif domain-containing protein 1 (CDPF1) (Homo sapiens (Human)).